Consider the following 275-residue polypeptide: Large ribosomal subunit protein uL2 (275 aa).

The disordered stretch occupies residues 212–275 (NRHRGIRPQT…DKLIISRRKK (64 aa)). Positions 257-275 (YKTRRKKPSDKLIISRRKK) are enriched in basic residues.

It belongs to the universal ribosomal protein uL2 family. As to quaternary structure, part of the 50S ribosomal subunit. Forms a bridge to the 30S subunit in the 70S ribosome.

In terms of biological role, one of the primary rRNA binding proteins. Required for association of the 30S and 50S subunits to form the 70S ribosome, for tRNA binding and peptide bond formation. It has been suggested to have peptidyltransferase activity; this is somewhat controversial. Makes several contacts with the 16S rRNA in the 70S ribosome. The protein is Large ribosomal subunit protein uL2 of Nitratiruptor sp. (strain SB155-2).